Reading from the N-terminus, the 767-residue chain is Transducin-like enhancer protein 2 (767 aa).

A q domain region spans residues 1 to 152 (MYPQGRHPTP…SLLGQQNQLQ (152 aa)). The segment at 153–215 (PLSHAPPVPL…SRVDRAASRS (63 aa)) is GP domain. Positions 198-212 (RVGVDAEGSRVDRAA) are enriched in basic and acidic residues. Disordered stretches follow at residues 198-257 (RVGV…EEDK), 264-283 (VDED…CGKA), and 296-346 (SPAS…SSAS). The segment at 216 to 279 (SSPSPPESLV…SEPPSPVTTP (64 aa)) is ccN domain. A Nuclear localization signal motif is present at residues 238–242 (KQQRA). Serine 253 carries the phosphoserine; by CK2 modification. At serine 274 the chain carries Phosphoserine; by CDK1. A Phosphothreonine; by CDK1 modification is found at threonine 278. An SP domain region spans residues 280-447 (CGKAPLCIPA…VAKPAYSFHV (168 aa)). Low complexity predominate over residues 296–309 (SPASLASSLGSPLP). The residue at position 306 (serine 306) is a Phosphoserine. Positions 323–346 (TPASRSCGTSPPQDSSTPGPSSAS) are enriched in polar residues. 6 WD repeats span residues 479–517 (AHGE…SKTP), 525–564 (NRDN…PRIK), 569–608 (SSAP…MVRQ), 611–650 (GHTD…QLQQ), 693–732 (LHES…SIFQ), and 734–766 (KESS…YEVV).

The protein belongs to the WD repeat Groucho/TLE family. Homooligomer and heterooligomer with other family members. Binds LEF1, TCF7, TCF7L1, TCF7L2, UTY, HES1 and HES5. Post-translationally, ubiquitinated by XIAP/BIRC4. In terms of tissue distribution, expressed in bone marrow-derived macrophages.

The protein localises to the nucleus. Functionally, transcriptional corepressor that binds to a number of transcription factors. Inhibits the transcriptional activation mediated by CTNNB1 and TCF family members in Wnt signaling. The effects of full-length TLE family members may be modulated by association with dominant-negative AES. In Mus musculus (Mouse), this protein is Transducin-like enhancer protein 2 (Tle2).